A 487-amino-acid chain; its full sequence is Betaine aldehyde dehydrogenase (487 aa).

K(+)-binding residues include I27 and D93. 149-151 (GAW) is a binding site for NAD(+). The active-site Charge relay system is K161. NAD(+) contacts are provided by residues 175 to 178 (KPSE) and 228 to 231 (SVPT). Residue L243 coordinates K(+). The Proton acceptor role is filled by E249. NAD(+) contacts are provided by G251, C283, and E384. The Nucleophile role is filled by C283. C283 is subject to Cysteine sulfenic acid (-SOH). K454 and G457 together coordinate K(+). E461 functions as the Charge relay system in the catalytic mechanism.

Belongs to the aldehyde dehydrogenase family. Dimer of dimers. The cofactor is K(+).

It carries out the reaction betaine aldehyde + NAD(+) + H2O = glycine betaine + NADH + 2 H(+). Its pathway is amine and polyamine biosynthesis; betaine biosynthesis via choline pathway; betaine from betaine aldehyde: step 1/1. In terms of biological role, involved in the biosynthesis of the osmoprotectant glycine betaine. Catalyzes the irreversible oxidation of betaine aldehyde to the corresponding acid. In Brucella anthropi (strain ATCC 49188 / DSM 6882 / CCUG 24695 / JCM 21032 / LMG 3331 / NBRC 15819 / NCTC 12168 / Alc 37) (Ochrobactrum anthropi), this protein is Betaine aldehyde dehydrogenase.